Reading from the N-terminus, the 190-residue chain is Interferon alpha-9 (190 aa).

The first 23 residues, 1–23 (MARPFAFLMVLVVISYWSTCSLG), serve as a signal peptide directing secretion. 2 disulfides stabilise this stretch: cysteine 24–cysteine 122 and cysteine 52–cysteine 162. N-linked (GlcNAc...) asparagine glycosylation is present at asparagine 101.

This sequence belongs to the alpha/beta interferon family.

The protein resides in the secreted. Produced by macrophages, IFN-alpha have antiviral activities. Interferon stimulates the production of two enzymes: a protein kinase and an oligoadenylate synthetase. This is Interferon alpha-9 (Ifna9) from Mus musculus (Mouse).